The sequence spans 194 residues: 22 kDa relaxation protein (194 aa).

This protein is probably required for relaxation complex formation. In Salmonella typhimurium, this protein is 22 kDa relaxation protein.